The primary structure comprises 315 residues: Tyrosine recombinase XerC (315 aa).

Residues 14-105 (PDLLNERQSW…GLRSLLHHLQ (92 aa)) form the Core-binding (CB) domain. The 184-residue stretch at 126-309 (SLPKPLTDRQ…DTARLLEIYD (184 aa)) folds into the Tyr recombinase domain. Active-site residues include R169, K193, H261, R264, and H287. Y296 (O-(3'-phospho-DNA)-tyrosine intermediate) is an active-site residue.

The protein belongs to the 'phage' integrase family. XerC subfamily. In terms of assembly, forms a cyclic heterotetrameric complex composed of two molecules of XerC and two molecules of XerD.

It is found in the cytoplasm. In terms of biological role, site-specific tyrosine recombinase, which acts by catalyzing the cutting and rejoining of the recombining DNA molecules. The XerC-XerD complex is essential to convert dimers of the bacterial chromosome into monomers to permit their segregation at cell division. It also contributes to the segregational stability of plasmids. The polypeptide is Tyrosine recombinase XerC (Agrobacterium fabrum (strain C58 / ATCC 33970) (Agrobacterium tumefaciens (strain C58))).